A 2897-amino-acid polypeptide reads, in one-letter code: Chromodomain-helicase-DNA-binding protein 9 (2897 aa).

Polar residues predominate over residues 173-201; that stretch reads QCTSLRSQQNRNNLNPGQNSLSQSKNFMN. Disordered regions lie at residues 173–265, 482–525, and 537–671; these read QCTS…CSVS, QRQP…KQEK, and AKER…SAPL. Lys-197 participates in a covalent cross-link: Glycyl lysine isopeptide (Lys-Gly) (interchain with G-Cter in SUMO2). The segment covering 220 to 235 has biased composition (low complexity); it reads SNSQQSISMQQFSQTS. Polar residues-rich tracts occupy residues 247 to 260 and 484 to 506; these read HQEG…PNMT and QPPS…TQVR. The residue at position 499 (Lys-499) is an N6-acetyllysine. The segment covering 508 to 525 has biased composition (basic and acidic residues); the sequence is MSEKKQRKKVESESKQEK. Ser-550 carries the post-translational modification Phosphoserine. Positions 573–593 are enriched in basic and acidic residues; that stretch reads KPKDKDSKKTKTCSKLKEKTK. Lys-596 is covalently cross-linked (Glycyl lysine isopeptide (Lys-Gly) (interchain with G-Cter in SUMO2)). Ser-611 carries the phosphoserine modification. Residues 634–644 show a composition bias toward basic residues; the sequence is RRSNRQIKRKK. Positions 645–660 are enriched in basic and acidic residues; sequence YAEDIEGKQSEEEVKG. 2 consecutive Chromo domains span residues 690–761 and 773–839; these read AIVD…HFFA and VEVD…RLDR. The LXXLL motif 1 signature appears at 868–872; that stretch reads LNWLL. Positions 872–1046 constitute a Helicase ATP-binding domain; sequence LFNWYNRRNC…FSLLHFLEPL (175 aa). ATP is bound at residue 885 to 892; sequence DEMGLGKT. A DEAH box motif is present at residues 997 to 1000; the sequence is DEAH. An LXXLL motif 2 motif is present at residues 1036 to 1040; it reads LFSLL. One can recognise a Helicase C-terminal domain in the interval 1186 to 1337; sequence LIDKLLPKMK…KAVLQSMSGR (152 aa). The tract at residues 1461–1484 is disordered; that stretch reads KDELAELSEAESEGDEKPKLRRPC. The segment covering 1465–1474 has biased composition (acidic residues); that stretch reads AELSEAESEG. Residues Ser-1468 and Ser-1472 each carry the phosphoserine modification. A compositionally biased stretch (basic and acidic residues) spans 1475–1484; sequence DEKPKLRRPC. Residues Lys-1588, Lys-1738, and Lys-1903 each participate in a glycyl lysine isopeptide (Lys-Gly) (interchain with G-Cter in SUMO2) cross-link. A Phosphoserine modification is found at Ser-2026. Residues 2031–2035 carry the LXXLL motif 3 motif; the sequence is LPRLL. Lys-2038 participates in a covalent cross-link: Glycyl lysine isopeptide (Lys-Gly) (interchain with G-Cter in SUMO2). Disordered regions lie at residues 2050 to 2238 and 2305 to 2337; these read ENLK…QMNN and GAAT…SKVK. A phosphoserine mark is found at Ser-2058 and Ser-2059. Lys-2074 is covalently cross-linked (Glycyl lysine isopeptide (Lys-Gly) (interchain with G-Cter in SUMO2)). Phosphoserine occurs at positions 2075 and 2079. A compositionally biased stretch (basic and acidic residues) spans 2094–2104; sequence SGGKCETDRRM. The span at 2141–2193 shows a compositional bias: low complexity; the sequence is SSCSSRSSSSSSSSSCSHSRSGSSSSSSSSCSSASSSSSSSTSSSSSSSSSSS. A compositionally biased stretch (basic and acidic residues) spans 2203–2216; the sequence is AQKRESTTHMKAYD. Over residues 2221–2238 the composition is skewed to polar residues; it reads ASLSTTQDETQDSFQMNN. The binds A/T-rich DNA stretch occupies residues 2332–2481; that stretch reads QMSKVKKHVR…LSYTQPQGIP (150 aa). Residues Lys-2350, Lys-2356, and Lys-2361 each participate in a glycyl lysine isopeptide (Lys-Gly) (interchain with G-Cter in SUMO2) cross-link. An a.T hook-like region spans residues 2429–2436; the sequence is KKRRGRRK. Positions 2721–2725 match the LXXLL motif 4 motif; that stretch reads LPNLL. A disordered region spans residues 2729–2777; sequence GLLTKPTESGTEDKKGSDSKESEGKTERTESQSSENGGENSVSSSPSTS. Residues 2739-2758 show a composition bias toward basic and acidic residues; sequence TEDKKGSDSKESEGKTERTE. A compositionally biased stretch (low complexity) spans 2759-2777; sequence SQSSENGGENSVSSSPSTS. The LXXLL motif 5 motif lies at 2793-2797; the sequence is LNPLL. The tract at residues 2827-2897 is disordered; that stretch reads VQNKNSDLGS…SEDSDSSNED (71 aa). Basic and acidic residues predominate over residues 2840–2857; that stretch reads VEVKEEDSRIKDQEDKGG. Lys-2843 is covalently cross-linked (Glycyl lysine isopeptide (Lys-Gly) (interchain with G-Cter in SUMO2)). Over residues 2877-2888 the composition is skewed to low complexity; it reads ASSGSDSTSSSS.

The protein belongs to the SNF2/RAD54 helicase family. In terms of assembly, interacts with PPARA. Probably interacts with ESR1 and NR1I3. In terms of processing, phosphorylated on serine and tyrosine residues. In terms of tissue distribution, widely expressed at low levels. In bone marrow, expression is restricted to osteoprogenitor cells adjacent to mature osteoblasts.

It is found in the cytoplasm. The protein resides in the nucleus. The enzyme catalyses ATP + H2O = ADP + phosphate + H(+). In terms of biological role, probable ATP-dependent chromatin-remodeling factor. Acts as a transcriptional coactivator for PPARA and possibly other nuclear receptors. Has DNA-dependent ATPase activity and binds to A/T-rich DNA. Associates with A/T-rich regulatory regions in promoters of genes that participate in the differentiation of progenitors during osteogenesis. This Homo sapiens (Human) protein is Chromodomain-helicase-DNA-binding protein 9 (CHD9).